Consider the following 394-residue polypeptide: Na(+)/H(+) antiporter NhaA (394 aa).

Helical transmembrane passes span Leu11–Asn31, Leu59–Val79, Ile95–Ile115, Gly125–Ser145, Phe155–Phe175, His177–Met197, Thr203–Leu220, Ala254–Val274, Leu296–Ile316, Ile328–Leu348, and Leu365–Thr385.

The protein belongs to the NhaA Na(+)/H(+) (TC 2.A.33) antiporter family.

It is found in the cell inner membrane. It catalyses the reaction Na(+)(in) + 2 H(+)(out) = Na(+)(out) + 2 H(+)(in). Functionally, na(+)/H(+) antiporter that extrudes sodium in exchange for external protons. This Actinobacillus pleuropneumoniae serotype 7 (strain AP76) protein is Na(+)/H(+) antiporter NhaA.